Reading from the N-terminus, the 178-residue chain is ATP synthase subunit delta (178 aa).

It belongs to the ATPase delta chain family. As to quaternary structure, F-type ATPases have 2 components, F(1) - the catalytic core - and F(0) - the membrane proton channel. F(1) has five subunits: alpha(3), beta(3), gamma(1), delta(1), epsilon(1). F(0) has three main subunits: a(1), b(2) and c(10-14). The alpha and beta chains form an alternating ring which encloses part of the gamma chain. F(1) is attached to F(0) by a central stalk formed by the gamma and epsilon chains, while a peripheral stalk is formed by the delta and b chains.

The protein localises to the cell membrane. F(1)F(0) ATP synthase produces ATP from ADP in the presence of a proton or sodium gradient. F-type ATPases consist of two structural domains, F(1) containing the extramembraneous catalytic core and F(0) containing the membrane proton channel, linked together by a central stalk and a peripheral stalk. During catalysis, ATP synthesis in the catalytic domain of F(1) is coupled via a rotary mechanism of the central stalk subunits to proton translocation. Functionally, this protein is part of the stalk that links CF(0) to CF(1). It either transmits conformational changes from CF(0) to CF(1) or is implicated in proton conduction. The polypeptide is ATP synthase subunit delta (Acetivibrio thermocellus (strain ATCC 27405 / DSM 1237 / JCM 9322 / NBRC 103400 / NCIMB 10682 / NRRL B-4536 / VPI 7372) (Clostridium thermocellum)).